The chain runs to 357 residues: Glutamate 5-kinase (357 aa).

Lysine 7 serves as a coordination point for ATP. Serine 43, aspartate 130, and asparagine 142 together coordinate substrate. Residues 162–163 (TD) and 205–211 (TGGMTTK) contribute to the ATP site. In terms of domain architecture, PUA spans 270–353 (EGELQLDAGA…PVVVHRDGLV (84 aa)).

This sequence belongs to the glutamate 5-kinase family.

Its subcellular location is the cytoplasm. It catalyses the reaction L-glutamate + ATP = L-glutamyl 5-phosphate + ADP. It participates in amino-acid biosynthesis; L-proline biosynthesis; L-glutamate 5-semialdehyde from L-glutamate: step 1/2. Its function is as follows. Catalyzes the transfer of a phosphate group to glutamate to form L-glutamate 5-phosphate. The sequence is that of Glutamate 5-kinase from Synechococcus sp. (strain CC9605).